A 424-amino-acid polypeptide reads, in one-letter code: Glutamate-1-semialdehyde 2,1-aminomutase (424 aa).

K258 carries the post-translational modification N6-(pyridoxal phosphate)lysine.

It belongs to the class-III pyridoxal-phosphate-dependent aminotransferase family. HemL subfamily. The cofactor is pyridoxal 5'-phosphate.

It localises to the cytoplasm. The enzyme catalyses (S)-4-amino-5-oxopentanoate = 5-aminolevulinate. It functions in the pathway porphyrin-containing compound metabolism; protoporphyrin-IX biosynthesis; 5-aminolevulinate from L-glutamyl-tRNA(Glu): step 2/2. This is Glutamate-1-semialdehyde 2,1-aminomutase from Pyrobaculum neutrophilum (strain DSM 2338 / JCM 9278 / NBRC 100436 / V24Sta) (Thermoproteus neutrophilus).